A 185-amino-acid chain; its full sequence is Ribosome-recycling factor (185 aa).

It belongs to the RRF family.

Its subcellular location is the cytoplasm. Responsible for the release of ribosomes from messenger RNA at the termination of protein biosynthesis. May increase the efficiency of translation by recycling ribosomes from one round of translation to another. This is Ribosome-recycling factor from Teredinibacter turnerae (strain ATCC 39867 / T7901).